A 396-amino-acid chain; its full sequence is Calreticulin (396 aa).

Residues 1–15 form the signal peptide; the sequence is MKSLCLLAIVAVVSA. An intrachain disulfide couples C101 to C133. 4 residues coordinate an alpha-D-glucoside: Y105, K107, Y124, and D131. 7 tandem repeats follow at residues 186–197, 205–216, 222–233, 239–250, 254–264, 268–278, and 282–292. The 4 X approximate repeats stretch occupies residues 186 to 250; sequence AQTGSLEEDW…DAKKPEDWDD (65 aa). Residues 193–301 are P-domain; the sequence is EDWDLLPAKK…PEYTPDDELY (109 aa). Residues 202–212 are compositionally biased toward basic and acidic residues; it reads KIKDPDAKKPE. The tract at residues 202 to 250 is disordered; the sequence is KIKDPDAKKPEDWDEREYIDDAEDVKPEDWEKPEHIPDPDAKKPEDWDD. Residues 213–224 show a composition bias toward acidic residues; sequence DWDEREYIDDAE. Over residues 225–246 the composition is skewed to basic and acidic residues; it reads DVKPEDWEKPEHIPDPDAKKPE. The tract at residues 254 to 292 is 3 X approximate repeats; that stretch reads GEWEPPMIDNPEYKGEWKPKQIKNPAYKGKWIHPEIENP. The C-domain stretch occupies residues 302–396; sequence LYENWGAIGF…KEEEEGHDEL (95 aa). D312 provides a ligand contact to an alpha-D-glucoside. The segment covering 342-380 has biased composition (basic and acidic residues); sequence FDKLKTVEKEKKEKADEEARKVEEEARKKAEEEKEAKKD. The interval 342-396 is disordered; that stretch reads FDKLKTVEKEKKEKADEEARKVEEEARKKAEEEKEAKKDDDEEEEKEEEEGHDEL. Positions 381–396 are enriched in acidic residues; that stretch reads DDEEEEKEEEEGHDEL. The Prevents secretion from ER motif lies at 393-396; it reads HDEL.

Belongs to the calreticulin family.

The protein localises to the endoplasmic reticulum lumen. In terms of biological role, molecular calcium-binding chaperone promoting folding, oligomeric assembly and quality control in the ER via the calreticulin/calnexin cycle. This lectin may interact transiently with almost all of the monoglucosylated glycoproteins that are synthesized in the ER. Probably by controlling the folding of extracellular matrix protein unc-52/Perlecan, may play a role in the formation of fibrous organelles, a hemidesmosome-like structure attaching muscles to the epidermis. Protects dopaminergic neurons against oxidative stress-induced neurodegeneration. The chain is Calreticulin (crt-1) from Caenorhabditis briggsae.